Reading from the N-terminus, the 159-residue chain is Histone H1 (159 aa).

Disordered regions lie at residues 1-31 (MAEKESSKKVTTKKPAATHRRRDGCNSITEL), 80-99 (KGAECAGGQGTGVGEGKKEK), and 132-159 (AAKKVKAAPKKAKKPVKKTTEKKEKKKS). The segment covering 10 to 22 (VTTKKPAATHRRR) has biased composition (basic residues). The H15 domain maps to 12-102 (TKKPAATHRR…GEGKKEKEKA (91 aa)). A compositionally biased stretch (gly residues) spans 84–93 (CAGGQGTGVG). Over residues 134 to 148 (KKVKAAPKKAKKPVK) the composition is skewed to basic residues. The span at 149–159 (KTTEKKEKKKS) shows a compositional bias: basic and acidic residues.

The protein belongs to the histone H1/H5 family.

The protein resides in the nucleus. It localises to the chromosome. Histones H1 are necessary for the condensation of nucleosome chains into higher-order structures. The chain is Histone H1 from Psammechinus miliaris (Green sea urchin).